The following is a 292-amino-acid chain: Homoserine kinase (292 aa).

84 to 94 provides a ligand contact to ATP; sequence PLARGMGSSSA.

It belongs to the GHMP kinase family. Homoserine kinase subfamily.

It localises to the cytoplasm. It carries out the reaction L-homoserine + ATP = O-phospho-L-homoserine + ADP + H(+). It functions in the pathway amino-acid biosynthesis; L-threonine biosynthesis; L-threonine from L-aspartate: step 4/5. In terms of biological role, catalyzes the ATP-dependent phosphorylation of L-homoserine to L-homoserine phosphate. The polypeptide is Homoserine kinase (Thermus thermophilus (strain ATCC 27634 / DSM 579 / HB8)).